The chain runs to 604 residues: Prostaglandin G/H synthase 2 (604 aa).

The N-terminal stretch at 1-17 (MLARALLLCAAVALSGA) is a signal peptide. An EGF-like domain is found at 18–55 (ANPCCSHPCQNRGVCMSVGFDQYKCDCTRTGFYGENCT). Cystine bridges form between Cys21–Cys32, Cys22–Cys145, Cys26–Cys42, and Cys44–Cys54. An N-linked (GlcNAc...) asparagine glycan is attached at Asn53. A substrate-binding site is contributed by Arg106. The N-linked (GlcNAc...) asparagine glycan is linked to Asn130. The active-site Proton acceptor is the His193. A substrate-binding site is contributed by Tyr341. The For cyclooxygenase activity role is filled by Tyr371. His374 provides a ligand contact to heme b. An N-linked (GlcNAc...) asparagine glycan is attached at Asn396. Residue Cys526 is modified to S-nitrosocysteine. A disulfide bond links Cys555 and Cys561. Ser565 carries the post-translational modification O-acetylserine. Asn580 carries N-linked (GlcNAc...) asparagine glycosylation.

The protein belongs to the prostaglandin G/H synthase family. In terms of assembly, homodimer. Heme b serves as cofactor. Post-translationally, S-nitrosylation by NOS2 (iNOS) activates enzyme activity. S-nitrosylation may take place on different Cys residues in addition to Cys-526. Acetylated at Ser-565 by SPHK1. During neuroinflammation, acetylation by SPHK1 promotes neuronal secretion of specialized preresolving mediators (SPMs), especially 15-R-lipoxin A4, which results in an increase of phagocytic microglia.

It is found in the microsome membrane. The protein localises to the endoplasmic reticulum membrane. It localises to the nucleus inner membrane. Its subcellular location is the nucleus outer membrane. It carries out the reaction (5Z,8Z,11Z,14Z)-eicosatetraenoate + AH2 + 2 O2 = prostaglandin H2 + A + H2O. It catalyses the reaction (5Z,8Z,11Z,14Z)-eicosatetraenoate + 2 O2 = prostaglandin G2. The enzyme catalyses prostaglandin G2 + AH2 = prostaglandin H2 + A + H2O. The catalysed reaction is (5Z,8Z,11Z,14Z,17Z)-eicosapentaenoate + 2 O2 = prostaglandin G3. It carries out the reaction prostaglandin G3 + AH2 = prostaglandin H3 + A + H2O. It catalyses the reaction (8Z,11Z,14Z)-eicosatrienoate + 2 O2 = prostaglandin G1. The enzyme catalyses prostaglandin G1 + AH2 = prostaglandin H1 + A + H2O. The catalysed reaction is 2-(5Z,8Z,11Z,14Z)-eicosatetraenoyl-sn-glycero-3-phosphoethanolamine + 2 O2 = 2-(prostaglandin G2)-sn-glycero-3-phosphoethanolamine. It carries out the reaction 2-(prostaglandin G2)-sn-glycero-3-phosphoethanolamine + AH2 = 2-(prostaglandin H2)-sn-glycero-3-phosphoethanolamine + A + H2O. It catalyses the reaction 2-(5Z,8Z,11Z,14Z)-eicosatetraenoyl-sn-glycero-3-phosphocholine + 2 O2 = 2-(prostaglandin G2)-sn-glycero-3-phosphocholine. The enzyme catalyses 2-(prostaglandin G2)-sn-glycero-3-phosphocholine + AH2 = 2-(prostaglandin H2)-sn-glycero-3-phosphocholine + A + H2O. The catalysed reaction is (15S)-hydroperoxy-(5Z,8Z,11Z,13E)-eicosatetraenoate + AH2 = (15S)-hydroxy-(5Z,8Z,11Z,13E)-eicosatetraenoate + A + H2O. It carries out the reaction 2-(5Z,8Z,11Z,14Z)-eicosatetraenoyl-sn-glycero-3-phosphocholine + AH2 + O2 = 2-[(15S)-hydroxy-(5Z,8Z,11Z,13E)-eicosatetraenoyl]-sn-glycero-3-phosphocholine + A + H2O. It catalyses the reaction 2-(5Z,8Z,11Z,14Z)-eicosatetraenoyl-sn-glycero-3-phosphocholine + AH2 + O2 = 2-[(15R)-hydroxy-(5Z,8Z,11Z,13E)-eicosatetraenoyl]-sn-glycero-3-phosphocholine + A + H2O. The enzyme catalyses 2-(5Z,8Z,11Z,14Z)-eicosatetraenoyl-sn-glycero-3-phosphocholine + AH2 + O2 = 2-[(11R)-hydroxy-(5Z,8Z,12E,14Z)-eicosatetraenoyl]-sn-glycero-3-phosphocholine + A + H2O. The catalysed reaction is (9Z,12Z)-octadecadienoate + AH2 + O2 = 9-hydroxy-(10E,12Z)-octadecadienoate + A + H2O. It carries out the reaction (9Z,12Z)-octadecadienoate + AH2 + O2 = 13-hydroxy-(9Z,11E)-octadecadienoate + A + H2O. It catalyses the reaction (5Z,8Z,11Z,14Z)-eicosatetraenoate + AH2 + O2 = (15R)-hydroxy-(5Z,8Z,11Z,13E)-eicosatetraenoate + A + H2O. The enzyme catalyses (5Z,8Z,11Z,14Z)-eicosatetraenoate + AH2 + O2 = (11R)-hydroxy-(5Z,8Z,12E,14Z)-eicosatetraenoate + A + H2O. The catalysed reaction is (5Z,8Z,11Z,14Z,17Z)-eicosapentaenoate + AH2 + O2 = (11R)-hydroxy-(5Z,8Z,12E,14Z,17Z)-eicosapentaenoate + A + H2O. It carries out the reaction (5Z,8Z,11Z,14Z,17Z)-eicosapentaenoate + AH2 + O2 = (18S)-hydroxy-(5Z,8Z,11Z,14Z,16E)-eicosapentaenoate + A + H2O. It catalyses the reaction (5Z,8Z,11Z,14Z,17Z)-eicosapentaenoate + AH2 + O2 = (18R)-hydroxy-(5Z,8Z,11Z,14Z,16E)-eicosapentaenoate + A + H2O. The enzyme catalyses (5Z,8Z,11Z,14Z,17Z)-eicosapentaenoate + AH2 + O2 = (15R)-hydroxy-(5Z,8Z,11Z,13E,17Z)-eicosapentaenoate + A + H2O. The catalysed reaction is (5Z,8Z,11Z,14Z,17Z)-eicosapentaenoate + AH2 + O2 = (15S)-hydroxy-(5Z,8Z,11Z,13E,17Z)-eicosapentaenoate + A + H2O. It carries out the reaction (7Z,10Z,13Z,16Z,19Z)-docosapentaenoate + AH2 + O2 = 13R-hydroxy-(7Z,10Z,14E,16Z,19Z)-docosapentaenoate + A + H2O. It catalyses the reaction (4Z,7Z,10Z,13Z,16Z,19Z)-docosahexaenoate + AH2 + O2 = 13-hydroxy-(4Z,7Z,10Z,14E,16Z,19Z)-docosahexaenoate + A + H2O. The enzyme catalyses (5S)-hydroxy-(6E,8Z,11Z,14Z)-eicosatetraenoate + AH2 + O2 = (5S,15R)-dihydroxy-(6E,8Z,11Z,13E)-eicosatetraenoate + A + H2O. The catalysed reaction is (4Z,7Z,10Z,13Z,16Z,19Z)-docosahexaenoate + AH2 + O2 = 17R-hydroxy-(4Z,7Z,10Z,13Z,15E,19Z)-docosahexaenoate + A + H2O. It carries out the reaction (5S)-hydroxy-(6E,8Z,11Z,14Z)-eicosatetraenoate + AH2 + O2 = (5S,15S)-dihydroxy-(6E,8Z,11Z,13E)-eicosatetraenoate + A + H2O. It catalyses the reaction (5S)-hydroxy-(6E,8Z,11Z,14Z)-eicosatetraenoate + AH2 + O2 = (5S,11R)-dihydroxy-(6E,8Z,12E,14Z)-eicosatetraenoate + A + H2O. The enzyme catalyses 2-(5Z,8Z,11Z,14Z-eicosatetraenoyl)-glycerol + 2 O2 = 2-glyceryl-prostaglandin G2. The catalysed reaction is 2-glyceryl-prostaglandin G2 + AH2 = 2-glyceryl-prostaglandin H2 + A + H2O. It carries out the reaction (5Z,8Z,11Z,14Z)-eicosatetraenoate + O2 = (15R)-hydroperoxy-(5Z,8Z,11Z,13E)-eicosatetraenoate. It catalyses the reaction (5Z,8Z,11Z,14Z)-eicosatetraenoate + O2 = 11R-hydroperoxy-(5Z,8Z,12E,14Z)-eicosatetraenoate. The enzyme catalyses (9Z,12Z)-octadecadienoate + AH2 + O2 = (9R)-hydroxy-(10E,12Z)-octadecadienoate + A + H2O. The catalysed reaction is (9Z,12Z)-octadecadienoate + AH2 + O2 = (9S)-hydroxy-(10E,12Z)-octadecadienoate + A + H2O. It carries out the reaction (9Z,12Z)-octadecadienoate + AH2 + O2 = (13S)-hydroxy-(9Z,11E)-octadecadienoate + A + H2O. It catalyses the reaction (9Z,12Z)-octadecadienoate + AH2 + O2 = (13R)-hydroxy-(9Z,11E)-octadecadienoate + A + H2O. It participates in lipid metabolism; prostaglandin biosynthesis. Functionally, dual cyclooxygenase and peroxidase in the biosynthesis pathway of prostanoids, a class of C20 oxylipins mainly derived from arachidonate ((5Z,8Z,11Z,14Z)-eicosatetraenoate, AA, C20:4(n-6)), with a particular role in the inflammatory response. The cyclooxygenase activity oxygenates AA to the hydroperoxy endoperoxide prostaglandin G2 (PGG2), and the peroxidase activity reduces PGG2 to the hydroxy endoperoxide prostaglandin H2 (PGH2), the precursor of all 2-series prostaglandins and thromboxanes. This complex transformation is initiated by abstraction of hydrogen at carbon 13 (with S-stereochemistry), followed by insertion of molecular O2 to form the endoperoxide bridge between carbon 9 and 11 that defines prostaglandins. The insertion of a second molecule of O2 (bis-oxygenase activity) yields a hydroperoxy group in PGG2 that is then reduced to PGH2 by two electrons. Similarly catalyzes successive cyclooxygenation and peroxidation of dihomo-gamma-linoleate (DGLA, C20:3(n-6)) and eicosapentaenoate (EPA, C20:5(n-3)) to corresponding PGH1 and PGH3, the precursors of 1- and 3-series prostaglandins. In an alternative pathway of prostanoid biosynthesis, converts 2-arachidonoyl lysophopholipids to prostanoid lysophopholipids, which are then hydrolyzed by intracellular phospholipases to release free prostanoids. Metabolizes 2-arachidonoyl glycerol yielding the glyceryl ester of PGH2, a process that can contribute to pain response. Generates lipid mediators from n-3 and n-6 polyunsaturated fatty acids (PUFAs) via a lipoxygenase-type mechanism. Oxygenates PUFAs to hydroperoxy compounds and then reduces them to corresponding alcohols. Plays a role in the generation of resolution phase interaction products (resolvins) during both sterile and infectious inflammation. Metabolizes docosahexaenoate (DHA, C22:6(n-3)) to 17R-HDHA, a precursor of the D-series resolvins (RvDs). As a component of the biosynthetic pathway of E-series resolvins (RvEs), converts eicosapentaenoate (EPA, C20:5(n-3)) primarily to 18S-HEPE that is further metabolized by ALOX5 and LTA4H to generate 18S-RvE1 and 18S-RvE2. In vascular endothelial cells, converts docosapentaenoate (DPA, C22:5(n-3)) to 13R-HDPA, a precursor for 13-series resolvins (RvTs) shown to activate macrophage phagocytosis during bacterial infection. In activated leukocytes, contributes to oxygenation of hydroxyeicosatetraenoates (HETE) to diHETES (5,15-diHETE and 5,11-diHETE). Can also use linoleate (LA, (9Z,12Z)-octadecadienoate, C18:2(n-6)) as substrate and produce hydroxyoctadecadienoates (HODEs) in a regio- and stereospecific manner, being (9R)-HODE ((9R)-hydroxy-(10E,12Z)-octadecadienoate) and (13S)-HODE ((13S)-hydroxy-(9Z,11E)-octadecadienoate) its major products. During neuroinflammation, plays a role in neuronal secretion of specialized preresolving mediators (SPMs) 15R-lipoxin A4 that regulates phagocytic microglia. The sequence is that of Prostaglandin G/H synthase 2 (PTGS2) from Bos taurus (Bovine).